A 359-amino-acid polypeptide reads, in one-letter code: Protein RecA (359 aa).

ATP is bound at residue 64–71 (GHESSGKT). Residues 329-359 (KYSNKDSNDSPKEGSKIKTKVNPAVTQDELI) form a disordered region. Positions 331 to 344 (SNKDSNDSPKEGSK) are enriched in basic and acidic residues.

It belongs to the RecA family.

The protein resides in the cytoplasm. Can catalyze the hydrolysis of ATP in the presence of single-stranded DNA, the ATP-dependent uptake of single-stranded DNA by duplex DNA, and the ATP-dependent hybridization of homologous single-stranded DNAs. It interacts with LexA causing its activation and leading to its autocatalytic cleavage. The protein is Protein RecA of Francisella tularensis subsp. tularensis (strain FSC 198).